The primary structure comprises 445 residues: Ubiquitin carboxyl-terminal hydrolase MINDY-3 (445 aa).

The active-site Nucleophile is the cysteine 51. At serine 125 the chain carries Phosphoserine. The Proton acceptor role is filled by histidine 287.

Belongs to the MINDY deubiquitinase family. FAM188 subfamily. Interacts with COPS5. Widely expressed with high levels in heart, skeletal muscle, and kidney, and low levels in liver and brain. Also expressed in lung (at protein level).

Its subcellular location is the nucleus. The enzyme catalyses Thiol-dependent hydrolysis of ester, thioester, amide, peptide and isopeptide bonds formed by the C-terminal Gly of ubiquitin (a 76-residue protein attached to proteins as an intracellular targeting signal).. In terms of biological role, hydrolase that can remove 'Lys-48'-linked conjugated ubiquitin from proteins. The sequence is that of Ubiquitin carboxyl-terminal hydrolase MINDY-3 from Homo sapiens (Human).